Consider the following 291-residue polypeptide: MKKKALLPLLLGVMVFLAGCDYSKSSNRDGFFYNTFVEPMSKVLHWLGHSVFNDDYGIAIIVLVLVIRIILLPFMLSNYKNSHLMREKMKVAKPEVDGVQEKVKRARTQEEKMAANQEMMEVYKKYDINPMKSALGCLPVLIQMPVVMGLYFVLRYRIGGGIAEHPHFLWFNLIHPDIWITIIAGVLYFIQAWVSSKQMPQEQRQMTYMMMIVSPIMIIWISLSSASALGLYWSVSAAFLVVQTYFANMYYEKVAQREVAPMIEKFKENNSNSNKKGKNTQVVSKNNKKKK.

A signal peptide spans methionine 1–glycine 19. Cysteine 20 carries the N-palmitoyl cysteine lipid modification. Residue cysteine 20 is the site of S-diacylglycerol cysteine attachment. The next 4 membrane-spanning stretches (helical) occupy residues tyrosine 56–leucine 76, alanine 134–leucine 154, tryptophan 170–isoleucine 190, and methionine 211–leucine 231. The disordered stretch occupies residues phenylalanine 266–lysine 291.

The protein belongs to the OXA1/ALB3/YidC family. Type 2 subfamily.

The protein resides in the cell membrane. Required for the insertion and/or proper folding and/or complex formation of integral membrane proteins into the membrane. Involved in integration of membrane proteins that insert both dependently and independently of the Sec translocase complex, as well as at least some lipoproteins. The protein is Membrane protein insertase YidC of Staphylococcus haemolyticus (strain JCSC1435).